We begin with the raw amino-acid sequence, 217 residues long: D-methionine transport system permease protein MetI (217 aa).

Topologically, residues 1–19 are periplasmic; sequence MSEPMMWLLVRGVWETLAM. The 192-residue stretch at 13–204 folds into the ABC transmembrane type-1 domain; that stretch reads VWETLAMTFV…LLVILVYLIQ (192 aa). The helical transmembrane segment at 20–40 threads the bilayer; the sequence is TFVSGFFGFVVGLPVGVLLYV. The Cytoplasmic segment spans residues 41 to 57; sequence TRPGQIIANAKLYRTVS. A helical membrane pass occupies residues 58-78; that stretch reads AIVNIFRSIPFIILLVWMIPF. Topologically, residues 79–80 are periplasmic; the sequence is TR. A helical membrane pass occupies residues 81 to 101; the sequence is VIVGTSIGLQAAIVPLTVGAA. Topologically, residues 102–151 are cytoplasmic; that stretch reads PFIARMVENALLEIPTGLIEASRAMGATPMQIVRKVLLPEALPGLVNAAT. A helical transmembrane segment spans residues 152 to 172; sequence ITLITLVGYSAMGGAVGAGGL. Residues 173-185 are Periplasmic-facing; that stretch reads GQIGYQYGYIGYN. The chain crosses the membrane as a helical span at residues 186 to 206; that stretch reads ATVMNTVLVLLVILVYLIQFA. Residues 207–217 lie on the Cytoplasmic side of the membrane; sequence GDRIVRAVTRK.

Belongs to the binding-protein-dependent transport system permease family. CysTW subfamily.

Its subcellular location is the cell inner membrane. Part of the binding-protein-dependent transport system for D-methionine and the toxic methionine analog alpha-methyl-methionine. Probably responsible for the translocation of the substrate across the membrane. The protein is D-methionine transport system permease protein MetI (metI) of Escherichia coli O157:H7.